Consider the following 224-residue polypeptide: Ribonuclease 3 (224 aa).

Residues 5–127 (LERLCRRLNY…ILAAIYLDGG (123 aa)) enclose the RNase III domain. A Mg(2+)-binding site is contributed by E40. D44 is an active-site residue. D113 and E116 together coordinate Mg(2+). E116 is an active-site residue. In terms of domain architecture, DRBM spans 154–224 (DAKTQLQEFL…AKAMLEQLQG (71 aa)).

Belongs to the ribonuclease III family. In terms of assembly, homodimer. It depends on Mg(2+) as a cofactor.

The protein resides in the cytoplasm. The catalysed reaction is Endonucleolytic cleavage to 5'-phosphomonoester.. Digests double-stranded RNA. Involved in the processing of primary rRNA transcript to yield the immediate precursors to the large and small rRNAs (23S and 16S). Processes some mRNAs, and tRNAs when they are encoded in the rRNA operon. Processes pre-crRNA and tracrRNA of type II CRISPR loci if present in the organism. In Legionella pneumophila (strain Lens), this protein is Ribonuclease 3.